Here is a 311-residue protein sequence, read N- to C-terminus: MQENQQITKKEQYNLNKLQKRLRRNVGEAIADFNMIEEGDRIMVCLSGGKDSYTMLEILRNLQQSAPINFSLVAVNLDQKQPGFPEHVLPEYLEKLGVEYKIVEENTYGIVKEKIPEGKTTCSLCSRLRRGILYRTATELGATKIALGHHRDDILQTLFLNMFYGGKMKGMPPKLMSDDGKHIVIRPLAYCREKDIQRFADAKAFPIIPCNLCGSQTNLQRQVIADMLRDWDKRYPGRIETMFSAMQNVVPSHLCDTNLFDFKGITHGSEVVNGGDLAFDREEIPLQPAGWQPEEDENQLDELRLNVVEVK.

The PP-loop motif motif lies at 47 to 52; sequence SGGKDS. Residues C122, C125, and C213 each coordinate [4Fe-4S] cluster.

This sequence belongs to the TtcA family. Homodimer. It depends on Mg(2+) as a cofactor. The cofactor is [4Fe-4S] cluster.

The protein resides in the cytoplasm. It carries out the reaction cytidine(32) in tRNA + S-sulfanyl-L-cysteinyl-[cysteine desulfurase] + AH2 + ATP = 2-thiocytidine(32) in tRNA + L-cysteinyl-[cysteine desulfurase] + A + AMP + diphosphate + H(+). Its pathway is tRNA modification. In terms of biological role, catalyzes the ATP-dependent 2-thiolation of cytidine in position 32 of tRNA, to form 2-thiocytidine (s(2)C32). The sulfur atoms are provided by the cysteine/cysteine desulfurase (IscS) system. This is tRNA-cytidine(32) 2-sulfurtransferase from Escherichia coli O127:H6 (strain E2348/69 / EPEC).